The primary structure comprises 226 residues: Cytidylate kinase (226 aa).

ATP is bound at residue 11-19 (GPAAAGKST).

Belongs to the cytidylate kinase family. Type 1 subfamily.

The protein localises to the cytoplasm. It carries out the reaction CMP + ATP = CDP + ADP. The catalysed reaction is dCMP + ATP = dCDP + ADP. The sequence is that of Cytidylate kinase from Bacillus licheniformis (strain ATCC 14580 / DSM 13 / JCM 2505 / CCUG 7422 / NBRC 12200 / NCIMB 9375 / NCTC 10341 / NRRL NRS-1264 / Gibson 46).